Here is a 556-residue protein sequence, read N- to C-terminus: Urocanate hydratase (556 aa).

Residues Gly52–Gly53, Gln130, Gly176–Gly178, Glu196, Arg201, Asn242–Ala243, Gln263–His267, Tyr273–Leu274, and Tyr322 each bind NAD(+). Cys410 is a catalytic residue. NAD(+) is bound at residue Gly492.

It belongs to the urocanase family. It depends on NAD(+) as a cofactor.

It localises to the cytoplasm. The catalysed reaction is 4-imidazolone-5-propanoate = trans-urocanate + H2O. The protein operates within amino-acid degradation; L-histidine degradation into L-glutamate; N-formimidoyl-L-glutamate from L-histidine: step 2/3. In terms of biological role, catalyzes the conversion of urocanate to 4-imidazolone-5-propionate. This is Urocanate hydratase from Bradyrhizobium diazoefficiens (strain JCM 10833 / BCRC 13528 / IAM 13628 / NBRC 14792 / USDA 110).